The primary structure comprises 231 residues: DNA mismatch repair protein MutH (231 aa).

It belongs to the MutH family.

The protein localises to the cytoplasm. Its function is as follows. Sequence-specific endonuclease that cleaves unmethylated GATC sequences. It is involved in DNA mismatch repair. The chain is DNA mismatch repair protein MutH from Klebsiella pneumoniae subsp. pneumoniae (strain ATCC 700721 / MGH 78578).